The chain runs to 445 residues: N-succinylarginine dihydrolase (445 aa).

Substrate is bound by residues 19–28 (AGLSFGNVAS), asparagine 110, and 137–138 (HR). Glutamate 174 is an active-site residue. Arginine 214 is a binding site for substrate. Residue histidine 250 is part of the active site. Substrate is bound by residues aspartate 252 and asparagine 363. Cysteine 369 (nucleophile) is an active-site residue.

It belongs to the succinylarginine dihydrolase family. In terms of assembly, homodimer.

It carries out the reaction N(2)-succinyl-L-arginine + 2 H2O + 2 H(+) = N(2)-succinyl-L-ornithine + 2 NH4(+) + CO2. It functions in the pathway amino-acid degradation; L-arginine degradation via AST pathway; L-glutamate and succinate from L-arginine: step 2/5. Catalyzes the hydrolysis of N(2)-succinylarginine into N(2)-succinylornithine, ammonia and CO(2). In Shewanella woodyi (strain ATCC 51908 / MS32), this protein is N-succinylarginine dihydrolase.